Consider the following 345-residue polypeptide: Anthranilate phosphoribosyltransferase (345 aa).

Residues Gly75, 78–79 (GD), Ser83, 85–88 (NIST), 103–111 (KHGNRAASS), and Gly115 contribute to the 5-phospho-alpha-D-ribose 1-diphosphate site. Gly75 is a binding site for anthranilate. Mg(2+) is bound at residue Ser87. An anthranilate-binding site is contributed by Asn106. An anthranilate-binding site is contributed by Arg161. Residues Asp219 and Glu220 each coordinate Mg(2+).

It belongs to the anthranilate phosphoribosyltransferase family. As to quaternary structure, homodimer. Mg(2+) is required as a cofactor.

It catalyses the reaction N-(5-phospho-beta-D-ribosyl)anthranilate + diphosphate = 5-phospho-alpha-D-ribose 1-diphosphate + anthranilate. The protein operates within amino-acid biosynthesis; L-tryptophan biosynthesis; L-tryptophan from chorismate: step 2/5. In terms of biological role, catalyzes the transfer of the phosphoribosyl group of 5-phosphorylribose-1-pyrophosphate (PRPP) to anthranilate to yield N-(5'-phosphoribosyl)-anthranilate (PRA). The protein is Anthranilate phosphoribosyltransferase of Nocardia farcinica (strain IFM 10152).